Here is a 275-residue protein sequence, read N- to C-terminus: Protein rolling stone (275 aa).

6 consecutive transmembrane segments (helical) span residues 45 to 65 (LLYRWIWALFFLGVYIMCVIV), 72 to 92 (FFIYMTNWGFGLCTITMLISA), 127 to 147 (WLYNMTLSLALIISTVYWVFL), 162 to 182 (IITHGMNSVMMLIDFLVIAFP), 185 to 205 (ILHMVYGMSLAIFFFLFTLIY), and 232 to 252 (MVTFVGIFLLIMCYWVLLFGL).

As to expression, expressed in cells of the somatic mesoderm, most notably the muscle founder cells, between embryonic stages 12 and 14, in growing muscle fibers in dorsal, lateral and ventral positions. At stage 16 strongest expression is in some ventral muscles and muscle 8. At stages 16/17 expression is restricted to some cells of the CNS, the brain and the gonads.

It localises to the membrane. In terms of biological role, may have a central role in the fusion process during myogenesis, within the somatic mesoderm. This is Protein rolling stone (rost) from Drosophila melanogaster (Fruit fly).